Reading from the N-terminus, the 249-residue chain is Myelin protein P0 (249 aa).

An N-terminal signal peptide occupies residues 1–29 (MALGAIGDGRLLLLLVGLLSASGPSPTLA). The Ig-like V-type domain occupies 30 to 143 (IHVYTPREVY…DIVGKSSQVT (114 aa)). The Extracellular portion of the chain corresponds to 30 to 153 (IHVYTPREVY…LYVLEKVPTR (124 aa)). The cysteines at positions 50 and 127 are disulfide-linked. A glycan (N-linked (GlcNAc...) asparagine) is linked at asparagine 122. Residues 154-179 (YGVVLGSIIGGVLLLVALLVAVVYLV) traverse the membrane as a helical segment. The Cytoplasmic portion of the chain corresponds to 180-249 (RFCWLRRQAV…APGEARKDKK (70 aa)). Residues 227-249 (RSAKAAAEKKSKGAPGEARKDKK) are disordered.

Belongs to the myelin P0 protein family. As to expression, found only in peripheral nervous system Schwann cells.

Its subcellular location is the cell membrane. In terms of biological role, is an adhesion molecule necessary for normal myelination in the peripheral nervous system. It mediates adhesion between adjacent myelin wraps and ultimately drives myelin compaction. The polypeptide is Myelin protein P0 (MPZ) (Gallus gallus (Chicken)).